A 77-amino-acid polypeptide reads, in one-letter code: Small ribosomal subunit protein bS16 (77 aa).

This sequence belongs to the bacterial ribosomal protein bS16 family.

In Helicobacter hepaticus (strain ATCC 51449 / 3B1), this protein is Small ribosomal subunit protein bS16.